We begin with the raw amino-acid sequence, 420 residues long: uncharacterized protein (420 aa).

This is an uncharacterized protein from Pseudanabaena tenuis (strain PCC 7409).